The primary structure comprises 324 residues: Acetyl-coenzyme A carboxylase carboxyl transferase subunit alpha (324 aa).

One can recognise a CoA carboxyltransferase C-terminal domain in the interval 37–291; sequence ILEDKLENLE…DLMIRKTFEQ (255 aa).

The protein belongs to the AccA family. Acetyl-CoA carboxylase is a heterohexamer composed of biotin carboxyl carrier protein (AccB), biotin carboxylase (AccC) and two subunits each of ACCase subunit alpha (AccA) and ACCase subunit beta (AccD).

The protein localises to the cytoplasm. The catalysed reaction is N(6)-carboxybiotinyl-L-lysyl-[protein] + acetyl-CoA = N(6)-biotinyl-L-lysyl-[protein] + malonyl-CoA. It functions in the pathway lipid metabolism; malonyl-CoA biosynthesis; malonyl-CoA from acetyl-CoA: step 1/1. Its function is as follows. Component of the acetyl coenzyme A carboxylase (ACC) complex. First, biotin carboxylase catalyzes the carboxylation of biotin on its carrier protein (BCCP) and then the CO(2) group is transferred by the carboxyltransferase to acetyl-CoA to form malonyl-CoA. This chain is Acetyl-coenzyme A carboxylase carboxyl transferase subunit alpha, found in Bacillus cereus (strain G9842).